An 84-amino-acid chain; its full sequence is Phosphoribosylformylglycinamidine synthase subunit PurS (84 aa).

It belongs to the PurS family. In terms of assembly, homodimer. Part of the FGAM synthase complex composed of 1 PurL, 1 PurQ and 2 PurS subunits.

The protein resides in the cytoplasm. The enzyme catalyses N(2)-formyl-N(1)-(5-phospho-beta-D-ribosyl)glycinamide + L-glutamine + ATP + H2O = 2-formamido-N(1)-(5-O-phospho-beta-D-ribosyl)acetamidine + L-glutamate + ADP + phosphate + H(+). It functions in the pathway purine metabolism; IMP biosynthesis via de novo pathway; 5-amino-1-(5-phospho-D-ribosyl)imidazole from N(2)-formyl-N(1)-(5-phospho-D-ribosyl)glycinamide: step 1/2. In terms of biological role, part of the phosphoribosylformylglycinamidine synthase complex involved in the purines biosynthetic pathway. Catalyzes the ATP-dependent conversion of formylglycinamide ribonucleotide (FGAR) and glutamine to yield formylglycinamidine ribonucleotide (FGAM) and glutamate. The FGAM synthase complex is composed of three subunits. PurQ produces an ammonia molecule by converting glutamine to glutamate. PurL transfers the ammonia molecule to FGAR to form FGAM in an ATP-dependent manner. PurS interacts with PurQ and PurL and is thought to assist in the transfer of the ammonia molecule from PurQ to PurL. This chain is Phosphoribosylformylglycinamidine synthase subunit PurS, found in Methanothermobacter thermautotrophicus (strain ATCC 29096 / DSM 1053 / JCM 10044 / NBRC 100330 / Delta H) (Methanobacterium thermoautotrophicum).